Here is a 204-residue protein sequence, read N- to C-terminus: Pro-hevein (204 aa).

Positions 1-17 (MNIFIVVLLCLTGVAIA) are cleaved as a signal peptide. Residues 18–60 (EQCGRQAGGKLCPNNLCCSQWGWCGSTDEYCSPDHNCQSNCKD) enclose the Chitin-binding type-1 domain. Cystine bridges form between Cys20–Cys35, Cys29–Cys41, Cys34–Cys48, and Cys54–Cys58. A propeptide spanning residues 61-66 (SGEGVG) is cleaved from the precursor. Positions 68 to 189 (GSASNVLATY…VNYQFVDCGD (122 aa)) constitute a Barwin domain. Cystine bridges form between Cys96–Cys128, Cys117–Cys151, and Cys131–Cys187.

In terms of processing, proteolytically processed to yield the two chains of the mature protein. In terms of tissue distribution, laticifer.

N-acetyl-D-glucosamine / N-acetyl-D-neuraminic acid binding lectin. Can inhibit fungal growth. This chain is Pro-hevein (HEV1), found in Hevea brasiliensis (Para rubber tree).